Reading from the N-terminus, the 434-residue chain is Trigger factor (434 aa).

Residues 163–248 (GDTAVIDFAG…VHDIKRKELP (86 aa)) enclose the PPIase FKBP-type domain.

The protein belongs to the FKBP-type PPIase family. Tig subfamily.

Its subcellular location is the cytoplasm. It carries out the reaction [protein]-peptidylproline (omega=180) = [protein]-peptidylproline (omega=0). In terms of biological role, involved in protein export. Acts as a chaperone by maintaining the newly synthesized protein in an open conformation. Functions as a peptidyl-prolyl cis-trans isomerase. In Shouchella clausii (strain KSM-K16) (Alkalihalobacillus clausii), this protein is Trigger factor.